The following is a 358-amino-acid chain: G-protein coupled receptor 87 (358 aa).

Residues 1–47 are Extracellular-facing; sequence MGLNLTLTKLPGNELYSQASHTANSTSEGHGKNSTLHNKFDTIILPV. 3 N-linked (GlcNAc...) asparagine glycosylation sites follow: Asn-4, Asn-24, and Asn-33. A helical membrane pass occupies residues 48 to 68; that stretch reads LYLVIFVASILLNGLAVWIFF. Over 69 to 75 the chain is Cytoplasmic; sequence HIRNKTS. The chain crosses the membrane as a helical span at residues 76 to 96; it reads FIFYLKNIVVADLIMTLTFPF. Residues 97–116 are Extracellular-facing; that stretch reads RIVRDAGFGPWYFEFILCRY. Cysteines 114 and 192 form a disulfide. The helical transmembrane segment at 117–137 threads the bilayer; the sequence is TSVLFYANMYTSIVFLGLISV. Topologically, residues 138–159 are cytoplasmic; sequence DRYLKVVKPFGDSRMYSITFTK. The helical transmembrane segment at 160–180 threads the bilayer; sequence VLSVCVWVIMAILSLPNIILT. Topologically, residues 181-208 are extracellular; sequence NGQPTKENIHDCMKLKSPLGAKWHMAVT. Residues 209–229 traverse the membrane as a helical segment; sequence YVDSCLFVAVLVILIGCYIAI. Residues 230–256 are Cytoplasmic-facing; sequence SRYIHKSSRQFISQSSRKRKHNQSIRV. Residues 257–277 form a helical membrane-spanning segment; it reads VVAVFFTCFLPYHLCRIPFTF. The Extracellular segment spans residues 278–297; sequence SNLDRLLDESAHKILYYCKE. A helical transmembrane segment spans residues 298 to 318; sequence MTLFLSACNVCLDPIIYFFMC. At 319–358 the chain is on the cytoplasmic side; it reads KSFSRRLFKKSNIRTRSESIRSLQSVRRSEVRIYYDYTDV.

Belongs to the G-protein coupled receptor 1 family. In terms of tissue distribution, expressed at high levels in testis and brain and to a lesser extent placenta, ovary, prostate, and skeletal muscle but not in heart, lung, kidney, liver or intestine.

It localises to the cell membrane. In terms of biological role, receptor for lysophosphatidic acid (LPA). Necessary for p53/TP53-dependent survival in response to DNA damage. Promotes the Hippo-YAP signaling pathway and thereby modulates glycolysis and oxidative stress production by the regulation of hexokinase-2/HK2. The protein is G-protein coupled receptor 87 (Gpr87) of Mus musculus (Mouse).